The primary structure comprises 155 residues: Small ribosomal subunit protein uS17 (155 aa).

Ala-2 is modified (N-acetylalanine).

The protein belongs to the universal ribosomal protein uS17 family.

This Drosophila pseudoobscura pseudoobscura (Fruit fly) protein is Small ribosomal subunit protein uS17.